A 220-amino-acid polypeptide reads, in one-letter code: Glycerol-3-phosphate acyltransferase (220 aa).

6 helical membrane passes run 11–31 (INVI…GYAL), 70–90 (LLVL…SKLF), 96–116 (LQWM…FLNF), 127–147 (GSVV…WFFV), 153–173 (ISSL…FFVP), and 193–213 (MVLI…NLLA).

Belongs to the PlsY family. In terms of assembly, probably interacts with PlsX.

The protein resides in the cell inner membrane. It catalyses the reaction an acyl phosphate + sn-glycerol 3-phosphate = a 1-acyl-sn-glycero-3-phosphate + phosphate. It participates in lipid metabolism; phospholipid metabolism. Catalyzes the transfer of an acyl group from acyl-phosphate (acyl-PO(4)) to glycerol-3-phosphate (G3P) to form lysophosphatidic acid (LPA). This enzyme utilizes acyl-phosphate as fatty acyl donor, but not acyl-CoA or acyl-ACP. In Helicobacter pylori (strain HPAG1), this protein is Glycerol-3-phosphate acyltransferase.